Consider the following 182-residue polypeptide: Dual-action ribosomal maturation protein DarP (182 aa).

This sequence belongs to the DarP family.

The protein localises to the cytoplasm. In terms of biological role, member of a network of 50S ribosomal subunit biogenesis factors which assembles along the 30S-50S interface, preventing incorrect 23S rRNA structures from forming. Promotes peptidyl transferase center (PTC) maturation. The chain is Dual-action ribosomal maturation protein DarP from Yersinia pestis.